Consider the following 91-residue polypeptide: Small ribosomal subunit protein uS19 (91 aa).

Belongs to the universal ribosomal protein uS19 family.

Its function is as follows. Protein S19 forms a complex with S13 that binds strongly to the 16S ribosomal RNA. This is Small ribosomal subunit protein uS19 from Cupriavidus taiwanensis (strain DSM 17343 / BCRC 17206 / CCUG 44338 / CIP 107171 / LMG 19424 / R1) (Ralstonia taiwanensis (strain LMG 19424)).